Consider the following 286-residue polypeptide: Probable endonuclease 4 (286 aa).

Zn(2+)-binding residues include H71, H111, E147, D181, H184, H218, D231, H233, and E263.

It belongs to the AP endonuclease 2 family. It depends on Zn(2+) as a cofactor.

The catalysed reaction is Endonucleolytic cleavage to 5'-phosphooligonucleotide end-products.. In terms of biological role, endonuclease IV plays a role in DNA repair. It cleaves phosphodiester bonds at apurinic or apyrimidinic (AP) sites, generating a 3'-hydroxyl group and a 5'-terminal sugar phosphate. The polypeptide is Probable endonuclease 4 (Vibrio cholerae serotype O1 (strain ATCC 39541 / Classical Ogawa 395 / O395)).